The sequence spans 397 residues: Succinate--CoA ligase [ADP-forming] subunit beta (397 aa).

An ATP-grasp domain is found at 9–254 (KELLRGYGAP…TSEEDEKEIE (246 aa)). Residues K46, 53-55 (GRG), E109, A112, and E117 contribute to the ATP site. Positions 209 and 223 each coordinate Mg(2+). Residues N274 and 331–333 (GIM) each bind substrate.

This sequence belongs to the succinate/malate CoA ligase beta subunit family. In terms of assembly, heterotetramer of two alpha and two beta subunits. Requires Mg(2+) as cofactor.

The catalysed reaction is succinate + ATP + CoA = succinyl-CoA + ADP + phosphate. It catalyses the reaction GTP + succinate + CoA = succinyl-CoA + GDP + phosphate. The protein operates within carbohydrate metabolism; tricarboxylic acid cycle; succinate from succinyl-CoA (ligase route): step 1/1. Its function is as follows. Succinyl-CoA synthetase functions in the citric acid cycle (TCA), coupling the hydrolysis of succinyl-CoA to the synthesis of either ATP or GTP and thus represents the only step of substrate-level phosphorylation in the TCA. The beta subunit provides nucleotide specificity of the enzyme and binds the substrate succinate, while the binding sites for coenzyme A and phosphate are found in the alpha subunit. The protein is Succinate--CoA ligase [ADP-forming] subunit beta of Chelativorans sp. (strain BNC1).